Reading from the N-terminus, the 191-residue chain is Adenylate kinase (191 aa).

12 to 17 contributes to the ATP binding site; sequence GSGKTT. Residues 34-63 are NMP; it reads STGDLLRAESAKKTERGLLIEKFTSQGELV. Residues Thr-35, Arg-40, 61–63, 88–91, and Gln-95 each bind AMP; these read ELV and GYPR. The segment at 130 to 136 is LID; sequence GRSRGAD. Arg-131 serves as a coordination point for ATP. The AMP site is built by Arg-133 and Arg-145. Arg-173 lines the ATP pocket.

Belongs to the adenylate kinase family. Monomer.

Its subcellular location is the cytoplasm. It carries out the reaction AMP + ATP = 2 ADP. It functions in the pathway purine metabolism; AMP biosynthesis via salvage pathway; AMP from ADP: step 1/1. Its function is as follows. Catalyzes the reversible transfer of the terminal phosphate group between ATP and AMP. Plays an important role in cellular energy homeostasis and in adenine nucleotide metabolism. In Helicobacter pylori (strain G27), this protein is Adenylate kinase.